The following is a 141-amino-acid chain: Hemoglobin subunit alpha-A (141 aa).

One can recognise a Globin domain in the interval Met-1–Arg-141. His-58 is a binding site for O2. A heme b-binding site is contributed by His-87.

Belongs to the globin family. As to quaternary structure, there are three forms of hemoglobin in Sphenodon: A, A' and D. Hb A is a tetramer of two alpha-A and two beta-1, Hb A' is a tetramer of two alpha-a and two beta-2, Hb D is a tetramer of two alpha-D and two beta-2. As to expression, red blood cells.

Its function is as follows. Involved in oxygen transport from the lung to the various peripheral tissues. This is Hemoglobin subunit alpha-A (HBAA) from Sphenodon punctatus (Tuatara).